The following is a 190-amino-acid chain: Putative serine carboxypeptidase-like 54 (190 aa).

A signal peptide spans 1–25 (MATKTFSLPFLLIVCIFSQLSSTFG). N-linked (GlcNAc...) asparagine glycans are attached at residues asparagine 58, asparagine 59, and asparagine 105.

The protein belongs to the peptidase S10 family.

It localises to the secreted. This Arabidopsis thaliana (Mouse-ear cress) protein is Putative serine carboxypeptidase-like 54 (SCPL54).